A 112-amino-acid chain; its full sequence is Putative membrane protein insertion efficiency factor (112 aa).

Belongs to the UPF0161 family.

Its subcellular location is the cell inner membrane. Its function is as follows. Could be involved in insertion of integral membrane proteins into the membrane. In Bradyrhizobium diazoefficiens (strain JCM 10833 / BCRC 13528 / IAM 13628 / NBRC 14792 / USDA 110), this protein is Putative membrane protein insertion efficiency factor.